The following is a 67-amino-acid chain: Small ribosomal subunit protein bS21 (67 aa).

The protein belongs to the bacterial ribosomal protein bS21 family.

The polypeptide is Small ribosomal subunit protein bS21 (Granulibacter bethesdensis (strain ATCC BAA-1260 / CGDNIH1)).